Here is a 370-residue protein sequence, read N- to C-terminus: Prolactin-releasing peptide receptor (370 aa).

The Extracellular portion of the chain corresponds to 1–62 (MASSTTRGPR…LQLVHQLKGL (62 aa)). Asn-27 and Asn-36 each carry an N-linked (GlcNAc...) asparagine glycan. The helical transmembrane segment at 63–83 (IVLLYSVVVVVGLVGNCLLVL) threads the bilayer. The Cytoplasmic portion of the chain corresponds to 84–101 (VIARVRRLHNVTNFLIGN). The helical transmembrane segment at 102 to 122 (LALSDVLMCTACVPLTLAYAF) threads the bilayer. Over 123–126 (EPRG) the chain is Extracellular. Residues 127–147 (WVFGGGLCHLVFFLQPVTVYV) form a helical membrane-spanning segment. An intrachain disulfide couples Cys-134 to Cys-211. The Cytoplasmic portion of the chain corresponds to 148–175 (SVFTLTTIAVDRYVVLVHPLRRRISLRL). The helical transmembrane segment at 176–196 (SAYAVLAIWALSAVLALPAAV) threads the bilayer. The Extracellular segment spans residues 197–225 (HTYHVELKPHDVRLCEEFWGSQERQRQLY). The chain crosses the membrane as a helical span at residues 226 to 246 (AWGLLLVTYLLPLLVILLSYV). Residues 247–276 (RVSVKLRNRVVPGCVTQSQADWDRARRRRT) lie on the Cytoplasmic side of the membrane. A helical transmembrane segment spans residues 277 to 297 (FCLLVVIVVVFAVCWLPLHVF). The Extracellular segment spans residues 298 to 317 (NLLRDLDPHAIDPYAFGLVQ). Residues 318–338 (LLCHWLAMSSACYNPFIYAWL) traverse the membrane as a helical segment. Over 339-369 (HDSFREELRKLLVAWPRKIAPHGQNMTVSVV) the chain is Cytoplasmic. A required for interaction with GRIP1, GRIP2 and PICK1 region spans residues 365 to 370 (TVSVVI).

This sequence belongs to the G-protein coupled receptor 1 family. In terms of assembly, interacts through its C-terminal region with the PDZ domain-containing proteins GRIP1, GRIP2 and PICK1. Interacts with PDZ domains 4 and 5 of GRIP1 and with the PDZ domain of PICK1. In terms of tissue distribution, only detected in the pituitary gland and in all cell types of pituitary adenomas.

It is found in the cell membrane. Functionally, receptor for prolactin-releasing peptide (PrRP). Implicated in lactation, regulation of food intake and pain-signal processing. In Homo sapiens (Human), this protein is Prolactin-releasing peptide receptor (PRLHR).